Consider the following 43-residue polypeptide: Protein PsbN 2 (43 aa).

Residues Ala4–Tyr24 traverse the membrane as a helical segment.

This sequence belongs to the PsbN family.

The protein localises to the cellular thylakoid membrane. In terms of biological role, may play a role in photosystem I and II biogenesis. The protein is Protein PsbN 2 of Microcystis aeruginosa (strain NIES-843 / IAM M-2473).